Here is a 187-residue protein sequence, read N- to C-terminus: Elongation factor P (187 aa).

This sequence belongs to the elongation factor P family.

The protein resides in the cytoplasm. Its pathway is protein biosynthesis; polypeptide chain elongation. Its function is as follows. Involved in peptide bond synthesis. Stimulates efficient translation and peptide-bond synthesis on native or reconstituted 70S ribosomes in vitro. Probably functions indirectly by altering the affinity of the ribosome for aminoacyl-tRNA, thus increasing their reactivity as acceptors for peptidyl transferase. This is Elongation factor P from Roseobacter denitrificans (strain ATCC 33942 / OCh 114) (Erythrobacter sp. (strain OCh 114)).